The following is a 310-amino-acid chain: Protoheme IX farnesyltransferase (310 aa).

Transmembrane regions (helical) follow at residues 31–51 (VMSLVIFTGFVGMWLAPDSIH), 52–72 (PLIAGIAVICIALGAGSAGAM), 102–119 (ALSFGLITGFFAVFFMAL), 123–145 (ILASFLLLFTIFYYICIYTIWLK), 151–171 (NIVIGGVSGALPPVIGHAAVS), 179–199 (IILFLIIFIWTPPHSWAIALF), 225–245 (ILIYSIILFIVSLMPFFIGMN), 248–268 (IYLIIVCIIGLVFLYYAFSLF), and 281–301 (FTYSIFYLCFIFILLSSTSTI).

Belongs to the UbiA prenyltransferase family. Protoheme IX farnesyltransferase subfamily.

It is found in the cell inner membrane. The catalysed reaction is heme b + (2E,6E)-farnesyl diphosphate + H2O = Fe(II)-heme o + diphosphate. It participates in porphyrin-containing compound metabolism; heme O biosynthesis; heme O from protoheme: step 1/1. Converts heme B (protoheme IX) to heme O by substitution of the vinyl group on carbon 2 of heme B porphyrin ring with a hydroxyethyl farnesyl side group. The sequence is that of Protoheme IX farnesyltransferase from Rickettsia prowazekii (strain Madrid E).